A 429-amino-acid chain; its full sequence is Adenylosuccinate synthetase (429 aa).

GTP-binding positions include 12-18 (GDEGKGK) and 40-42 (GHT). The active-site Proton acceptor is the D13. The Mg(2+) site is built by D13 and G40. IMP is bound by residues 13–16 (DEGK), 38–41 (NAGH), T127, R141, Q222, T237, and R301. H41 acts as the Proton donor in catalysis. Residue 297-303 (ATTGRPR) participates in substrate binding. GTP contacts are provided by residues R303, 329–331 (KLD), and 411–413 (SLG).

It belongs to the adenylosuccinate synthetase family. Homodimer. Requires Mg(2+) as cofactor.

The protein resides in the cytoplasm. The enzyme catalyses IMP + L-aspartate + GTP = N(6)-(1,2-dicarboxyethyl)-AMP + GDP + phosphate + 2 H(+). The protein operates within purine metabolism; AMP biosynthesis via de novo pathway; AMP from IMP: step 1/2. In terms of biological role, plays an important role in the de novo pathway of purine nucleotide biosynthesis. Catalyzes the first committed step in the biosynthesis of AMP from IMP. The sequence is that of Adenylosuccinate synthetase from Endomicrobium trichonymphae.